A 343-amino-acid polypeptide reads, in one-letter code: uncharacterized protein (343 aa).

This sequence belongs to the IIV-6 219L family.

This is an uncharacterized protein from Invertebrate iridescent virus 6 (IIV-6).